Here is a 208-residue protein sequence, read N- to C-terminus: High frequency lysogenization protein HflD homolog (208 aa).

Residues 91–125 (LMVLERKLNANKQAMNQLGERLGQLERQLAHFDLE) adopt a coiled-coil conformation.

Belongs to the HflD family.

It localises to the cytoplasm. The protein resides in the cell inner membrane. The protein is High frequency lysogenization protein HflD homolog of Serratia proteamaculans (strain 568).